Reading from the N-terminus, the 338-residue chain is Solute carrier family 35 member G5 (338 aa).

The segment at Met1 to Trp27 is disordered. A run of 9 helical transmembrane segments spans residues Thr37–Leu57, Leu67–Leu87, Gly102–Val122, Cys160–Leu180, Thr190–Tyr210, Thr221–Leu241, Leu250–Val270, Leu281–Leu301, and Val305–Ala325. In terms of domain architecture, EamA 1 spans Leu49–Gly174. The 54-residue stretch at Tyr272 to Ala325 folds into the EamA 2 domain.

Belongs to the SLC35G solute transporter family. In terms of tissue distribution, expressed in placenta and testis.

The protein localises to the membrane. This is Solute carrier family 35 member G5 (SLC35G5) from Homo sapiens (Human).